Reading from the N-terminus, the 349-residue chain is MDLFDRINKLKEEGLDQIKQAENQKMLDKIRVELMGRKGELTQILHSMKDIAPENRPKVGQEVNQVRDILQKQLDEAKDHFLQAIIAQKLEEEKIDVTLPGREGHLGSKHPINIILDDLESYFIGMGYKVVQGPEIETDHYCFEMMNLPKDHPARDMQATFYIDNEDLLRTQTSGDQARVLEKHDFSKGPLKMVGPGKVYRRDDDDATHSHQFQQMEGLVVDKNVTMSDLKGTLEMIAKHVFGQDRKTRLRPSYFPFTEPSVEMDVSCFNCDGKGCPICKYTGWIEVLGAGMVHPNVLENAGVDSTVYGGFAFGLGLDRFAILKYGISDIRDFYTNDVRFLAQFRKEED.

Glutamate 259 contributes to the Mg(2+) binding site.

It belongs to the class-II aminoacyl-tRNA synthetase family. Phe-tRNA synthetase alpha subunit type 1 subfamily. In terms of assembly, tetramer of two alpha and two beta subunits. Mg(2+) is required as a cofactor.

It localises to the cytoplasm. The catalysed reaction is tRNA(Phe) + L-phenylalanine + ATP = L-phenylalanyl-tRNA(Phe) + AMP + diphosphate + H(+). This is Phenylalanine--tRNA ligase alpha subunit from Lactobacillus gasseri (strain ATCC 33323 / DSM 20243 / BCRC 14619 / CIP 102991 / JCM 1131 / KCTC 3163 / NCIMB 11718 / NCTC 13722 / AM63).